Here is a 421-residue protein sequence, read N- to C-terminus: Large ribosomal subunit protein uL4 (421 aa).

Ala2 is modified (N-acetylalanine). N6-acetyllysine is present on Lys14. Arg97 is modified (omega-N-methylarginine). An N6-acetyllysine modification is found at Lys106. Lys239 is covalently cross-linked (Glycyl lysine isopeptide (Lys-Gly) (interchain with G-Cter in SUMO2)). Residue Lys259 is modified to N6-acetyllysine. Thr266 is modified (phosphothreonine). A Phosphoserine modification is found at Ser290. Arg300 is subject to Citrulline. Residue Lys327 forms a Glycyl lysine isopeptide (Lys-Gly) (interchain with G-Cter in SUMO2) linkage. An N6-acetyllysine mark is found at Lys333 and Lys353. Residues 359–421 are disordered; that stretch reads EAKSEEKGVP…PTTEEKKPAA (63 aa). The residue at position 361 (Lys361) is an N6-acetyllysine; alternate. Residue Lys361 forms a Glycyl lysine isopeptide (Lys-Gly) (interchain with G-Cter in SUMO1); alternate linkage. The residue at position 362 (Ser362) is a Phosphoserine. The span at 368-391 shows a compositional bias: basic residues; the sequence is PGKKPRRKKGKKTVGVKKPKKPVV. Residues 401-421 show a composition bias toward basic and acidic residues; sequence PAADKKPAEKKPTTEEKKPAA.

Belongs to the universal ribosomal protein uL4 family. In terms of assembly, component of the large ribosomal subunit. May bind IPO9 with low affinity. Interacts with RBM3. Post-translationally, citrullinated by PADI4.

The protein localises to the cytoplasm. Its function is as follows. Component of the large ribosomal subunit. The ribosome is a large ribonucleoprotein complex responsible for the synthesis of proteins in the cell. The protein is Large ribosomal subunit protein uL4 (RPL4) of Canis lupus familiaris (Dog).